The sequence spans 267 residues: Hydroxyethylthiazole kinase (267 aa).

Methionine 42 contributes to the substrate binding site. Cysteine 118 and threonine 162 together coordinate ATP. Glycine 189 provides a ligand contact to substrate.

Belongs to the Thz kinase family. It depends on Mg(2+) as a cofactor.

It carries out the reaction 5-(2-hydroxyethyl)-4-methylthiazole + ATP = 4-methyl-5-(2-phosphooxyethyl)-thiazole + ADP + H(+). Its pathway is cofactor biosynthesis; thiamine diphosphate biosynthesis; 4-methyl-5-(2-phosphoethyl)-thiazole from 5-(2-hydroxyethyl)-4-methylthiazole: step 1/1. Its function is as follows. Catalyzes the phosphorylation of the hydroxyl group of 4-methyl-5-beta-hydroxyethylthiazole (THZ). The polypeptide is Hydroxyethylthiazole kinase (Rubrobacter xylanophilus (strain DSM 9941 / JCM 11954 / NBRC 16129 / PRD-1)).